The sequence spans 121 residues: Large ribosomal subunit protein uL18 (121 aa).

It belongs to the universal ribosomal protein uL18 family. In terms of assembly, part of the 50S ribosomal subunit; part of the 5S rRNA/L5/L18/L25 subcomplex. Contacts the 5S and 23S rRNAs.

In terms of biological role, this is one of the proteins that bind and probably mediate the attachment of the 5S RNA into the large ribosomal subunit, where it forms part of the central protuberance. The polypeptide is Large ribosomal subunit protein uL18 (Anaplasma phagocytophilum (strain HZ)).